We begin with the raw amino-acid sequence, 599 residues long: Sulfite reductase [NADPH] flavoprotein alpha-component (599 aa).

In terms of domain architecture, Flavodoxin-like spans 64-202 (ITLISASQTG…VAAQWRARIV (139 aa)). FMN-binding positions include 70–75 (SQTGNA), 117–120 (STQG), and 153–162 (LGDTSYEFFC). The region spanning 234-448 (EAPLRASLSV…IEHNDNFRLP (215 aa)) is the FAD-binding FR-type domain. Residues threonine 322, alanine 356, 386–389 (RLYS), 404–406 (TVG), tyrosine 410, and 419–422 (GGAS) contribute to the FAD site. NADP(+) is bound by residues 519–520 (SR), 525–529 (KIYVQ), and aspartate 561. Tyrosine 599 is an FAD binding site.

This sequence belongs to the NADPH-dependent sulphite reductase flavoprotein subunit CysJ family. It in the N-terminal section; belongs to the flavodoxin family. In the C-terminal section; belongs to the flavoprotein pyridine nucleotide cytochrome reductase family. Alpha(8)-beta(8). The alpha component is a flavoprotein, the beta component is a hemoprotein. The cofactor is FAD. Requires FMN as cofactor.

The enzyme catalyses hydrogen sulfide + 3 NADP(+) + 3 H2O = sulfite + 3 NADPH + 4 H(+). Its pathway is sulfur metabolism; hydrogen sulfide biosynthesis; hydrogen sulfide from sulfite (NADPH route): step 1/1. Its function is as follows. Component of the sulfite reductase complex that catalyzes the 6-electron reduction of sulfite to sulfide. This is one of several activities required for the biosynthesis of L-cysteine from sulfate. The flavoprotein component catalyzes the electron flow from NADPH -&gt; FAD -&gt; FMN to the hemoprotein component. The polypeptide is Sulfite reductase [NADPH] flavoprotein alpha-component (Salmonella arizonae (strain ATCC BAA-731 / CDC346-86 / RSK2980)).